The following is a 94-amino-acid chain: Core protein OPG142 (94 aa).

It belongs to the orthopoxvirus OPG142 family. As to quaternary structure, part of a complex composed of the kinase OPG054, OPG092, OPG100, OPG114, OPG115, OPG142 and OPG157.

It localises to the host cytoplasm. The protein resides in the virion. Its function is as follows. Late protein which is a part of a large complex required for early virion morphogenesis. This complex participates in the formation of virosomes and the incorporation of virosomal contents into nascent immature virions. Required for the stability and kinase activity of OPG054. The polypeptide is Core protein OPG142 (OPG142) (Cynomys gunnisoni (Gunnison's prairie dog)).